Reading from the N-terminus, the 355-residue chain is Cyanide hydratase (355 aa).

The CN hydrolase domain maps to 6–285; the sequence is YKAAAVTSEP…DGLLFVDIDL (280 aa). The active-site Proton acceptor is glutamate 46. Lysine 128 is a catalytic residue. Cysteine 163 acts as the Nucleophile in catalysis.

The protein belongs to the carbon-nitrogen hydrolase superfamily. Nitrilase family. Oligomer of dimers, forming left-handed helical fibers.

The enzyme catalyses formamide = hydrogen cyanide + H2O. Its function is as follows. Catalyzes the hydration of cyanide to formamide. Degradation of cyanide may be important for plant pathogenic fungi in infection of cyanogenic plants. The protein is Cyanide hydratase of Gibberella zeae (strain ATCC MYA-4620 / CBS 123657 / FGSC 9075 / NRRL 31084 / PH-1) (Wheat head blight fungus).